The following is a 263-amino-acid chain: MTLREKYGEWGIILGATEGVGKAFCERLAKEGMNVVMVGRREEKLKELGEELKNTYEIDYKVVKADFSLPDATDKIFAATENLDMGFMAYVACLHSFGKIQDTPWEKHEAMINVNVVTFMKCFYHYMKIFAAQDRGAVINVSSMTGISSSPWNGQYGAGKAFILKMTEAVACETEKTNVDVEVITLGTTLTPSLLSNLPGGPQGEAVMKTAQTPEEVVDEAFEKLGKELSVISGERNKASVHDWKANHTEDDYIRYMGSFYQE.

NADP(+) contacts are provided by residues Thr-17 to Gly-21, Arg-40 to Arg-41, and Asp-66 to Phe-67. Tyr-156 functions as the Proton acceptor in the catalytic mechanism. An NADP(+)-binding site is contributed by Ser-240.

The protein belongs to the short-chain dehydrogenases/reductases (SDR) family.

The catalysed reaction is a 7beta-hydroxysteroid + NADP(+) = a 7-oxosteroid + NADPH + H(+). It carries out the reaction 7-oxolithocholate + NADPH + H(+) = ursodeoxycholate + NADP(+). 7beta-hydroxysteroid dehydrogenase that catalyzes the reduction of the 7-oxo group of 7-oxo-lithocholate (7-oxo-LCA), to yield ursodeoxycholate (UDCA). As R.gnavus is a common core bacterium of the human gut microbiota, this enzyme contributes to the formation of UDCA in the human colon. UDCA is regarded as a chemopreventive beneficial secondary bile acid due to its low hydrophobicity; it protects hepatocytes and bile duct epithelial cells against necrosis and apoptosis induced by more hydrophobic secondary bile acids like deoxycholate (DCA). This enzyme is also able to catalyze the reverse reaction in vitro, i.e. the oxidation of the 7beta-hydroxy group of UDCA to 7-oxo-LCA, but much less efficiently than the reduction reaction. This is 7beta-hydroxysteroid dehydrogenase from Mediterraneibacter gnavus (strain ATCC 29149 / DSM 114966 / JCM 6515 / VPI C7-9) (Ruminococcus gnavus).